Reading from the N-terminus, the 107-residue chain is Replication restart protein PriB (107 aa).

An SSB domain is found at Met1–Ala97.

It belongs to the PriB family. As to quaternary structure, homodimer. Interacts with PriA and DnaT. Component of the replication restart primosome. Primosome assembly occurs via a 'hand-off' mechanism. PriA binds to replication forks, subsequently PriB then DnaT bind; DnaT then displaces ssDNA to generate the helicase loading substrate.

Its function is as follows. Involved in the restart of stalled replication forks, which reloads the replicative helicase on sites other than the origin of replication; the PriA-PriB pathway is the major replication restart pathway. During primosome assembly it facilitates complex formation between PriA and DnaT on DNA; stabilizes PriA on DNA. Stimulates the DNA unwinding activity of PriA helicase. The polypeptide is Replication restart protein PriB (Bordetella parapertussis (strain 12822 / ATCC BAA-587 / NCTC 13253)).